The following is a 626-amino-acid chain: Probable metalloendopeptidase G1-type (626 aa).

Position 42 (His-42) interacts with Zn(2+). The active site involves Glu-45. His-46 serves as a coordination point for Zn(2+).

It belongs to the peptidase M44 family. The cofactor is Zn(2+).

Functionally, seems to be involved in viral proteins maturation by cleavage at Ala-Gly-|-Xaa motifs. In Fowlpox virus (strain NVSL) (FPV), this protein is Probable metalloendopeptidase G1-type.